Here is a 560-residue protein sequence, read N- to C-terminus: MSATASTATQPKPLEWLNRLRANPRIPLIVAGSAAVAIVVAMVLWAKTPDYRTLFSNLSDQDGGAIVAQLTQMNIPYRFANGSGAIEVPADKVHELRLRLAQQGLPKGGAVGFELLDQEKFGISQFSEQVNYQRALEGELARTIETLGPVKSARVHLAMPKPSLFVREQKSPSASVTVTLEPGRALDEGQISAVVHLVSSAVAGLPPGNVTLVDQSGHLLTQSNTSGRDLNDAQLKFANDVESRIQRRIEAILSPIVGNGNVHAQVTAQLDFANKEQTEEHYSPNGDASKATLRSRQLNISEQVGAGYPGGVPGALSNQPAPPNEAPIATPPTNQQNAQNTPQTSTSTNSNSAGPRSTQRNETSNYEVDRTIRHTKMNVGDIERLSVAVVVNYKTLADGKPLPLTADQMKQIEDLTREAMGFSDKRGDTLNVVNSPFSAVDNTGGELPFWQQQSFIDQLLAAGRWLLVLVVAWILWRKAVRPQLTRRVEEAKAAQEQAQVRQETEEAVEVRLSKDEQLQQRRANQRLGAEVMSQRIREMSDNDPRVVALVIRQWMSNDHE.

Residues 26 to 46 (IPLIVAGSAAVAIVVAMVLWA) form a helical membrane-spanning segment. A disordered region spans residues 304–372 (VGAGYPGGVP…TSNYEVDRTI (69 aa)). Over residues 331 to 353 (PPTNQQNAQNTPQTSTSTNSNSA) the composition is skewed to low complexity. Residues 354–366 (GPRSTQRNETSNY) show a composition bias toward polar residues. A helical membrane pass occupies residues 455–475 (FIDQLLAAGRWLLVLVVAWIL).

Belongs to the FliF family. The basal body constitutes a major portion of the flagellar organelle and consists of four rings (L,P,S, and M) mounted on a central rod. The M ring is integral to the inner membrane of the cell and may be connected to the flagellar rod via the S ring. The S (supramembrane ring) lies just distal to the M ring. The L and P rings lie in the outer membrane and the periplasmic space, respectively.

Its subcellular location is the cell inner membrane. The protein resides in the bacterial flagellum basal body. Its function is as follows. The M ring may be actively involved in energy transduction. The protein is Flagellar M-ring protein (fliF) of Salmonella typhimurium (strain LT2 / SGSC1412 / ATCC 700720).